The following is a 445-amino-acid chain: Proton extrusion protein PxcA (445 aa).

The next 4 helical transmembrane spans lie at 227–247 (FILL…TFLI), 322–342 (AIAN…VVAF), 369–389 (LIIL…WEVI), and 405–425 (FNFL…KYWI).

This sequence belongs to the CemA family.

It is found in the cell inner membrane. Its function is as follows. Required for H(+) efflux immediately after light irradiation to form a rapid H(+) concentration gradient across the thylakoid membranes. Together with PxcL, contributes to transient H(+) uptake following dark to light transition. The chain is Proton extrusion protein PxcA from Microcystis aeruginosa (strain NIES-843 / IAM M-2473).